The chain runs to 204 residues: Large ribosomal subunit protein eL15 (204 aa).

Belongs to the eukaryotic ribosomal protein eL15 family. In terms of assembly, component of the large ribosomal subunit.

It localises to the cytoplasm. In terms of biological role, component of the large ribosomal subunit. The ribosome is a large ribonucleoprotein complex responsible for the synthesis of proteins in the cell. The chain is Large ribosomal subunit protein eL15 (rpl15) from Hypophthalmichthys molitrix (Silver carp).